The primary structure comprises 134 residues: Transcription antitermination protein NusB (134 aa).

Belongs to the NusB family.

Its function is as follows. Involved in transcription antitermination. Required for transcription of ribosomal RNA (rRNA) genes. Binds specifically to the boxA antiterminator sequence of the ribosomal RNA (rrn) operons. This is Transcription antitermination protein NusB from Shewanella woodyi (strain ATCC 51908 / MS32).